Here is a 297-residue protein sequence, read N- to C-terminus: Nucleotide-binding protein Bxeno_A0336 (297 aa).

8 to 15 serves as a coordination point for ATP; it reads GISGSGKS. 57-60 contributes to the GTP binding site; sequence DARS.

This sequence belongs to the RapZ-like family.

Displays ATPase and GTPase activities. The polypeptide is Nucleotide-binding protein Bxeno_A0336 (Paraburkholderia xenovorans (strain LB400)).